Reading from the N-terminus, the 425-residue chain is Acyl-lipid (8-3)-desaturase (425 aa).

The disordered stretch occupies residues 1–25 (MPPRDSYSYAAPPSAQLHEVDTPQE). The Cytochrome b5 heme-binding domain maps to 18 to 93 (HEVDTPQEHD…SRPVHKGYSP (76 aa)). 2 residues coordinate heme: His47 and His69. The chain crosses the membrane as a helical span at residues 134 to 154 (VAGAALIWHGYTFAGIAMLGV). Positions 164 to 168 (HEGGH) match the Histidine box-1 motif. Residues 175–197 (IAFDRAIQVACYGLGCGMSGAWW) form a helical membrane-spanning segment. Residues 201–206 (HNKHHA) carry the Histidine box-2 motif. The next 2 membrane-spanning stretches (helical) occupy residues 241–261 (WLSM…ALGW) and 297–317 (GAGY…MYIF). The Histidine box-3 motif lies at 365 to 369 (QIEHH).

The protein belongs to the fatty acid desaturase type 1 family. Fe(2+) serves as cofactor.

The protein resides in the membrane. It catalyses the reaction an (8Z,11Z,14Z)-icosatrienoyl-containing glycerolipid + 2 Fe(II)-[cytochrome b5] + O2 + 2 H(+) = (5Z,8Z,11Z,14Z)-eicosatetraenoyl-containing glycerolipid + 2 Fe(III)-[cytochrome b5] + 2 H2O. It carries out the reaction an (8Z,11Z,14Z,17Z)-eicosatetraenoyl-containing glycerolipid + 2 Fe(II)-[cytochrome b5] + O2 + 2 H(+) = a (5Z,8Z,11Z,14Z,17Z)-eicosapentaenoyl-containing glycerolipid + 2 Fe(III)-[cytochrome b5] + 2 H2O. In terms of biological role, fatty acid desaturase that introduces a cis double bond at the 5-position in 20-carbon polyunsaturated fatty acids incorporated in a glycerolipid that contain a Delta(8) double bond. The chain is Acyl-lipid (8-3)-desaturase from Rebecca salina (Marine microalga).